We begin with the raw amino-acid sequence, 131 residues long: Small ribosomal subunit protein uS8 (131 aa).

This sequence belongs to the universal ribosomal protein uS8 family. In terms of assembly, part of the 30S ribosomal subunit. Contacts proteins S5 and S12.

Functionally, one of the primary rRNA binding proteins, it binds directly to 16S rRNA central domain where it helps coordinate assembly of the platform of the 30S subunit. In Legionella pneumophila (strain Paris), this protein is Small ribosomal subunit protein uS8.